Reading from the N-terminus, the 121-residue chain is Small ribosomal subunit protein uS13 (121 aa).

The tract at residues 89–121 (MRHRRGLPVRGQHTKNNARTRKGKAVSIAGKKK) is disordered.

This sequence belongs to the universal ribosomal protein uS13 family. In terms of assembly, part of the 30S ribosomal subunit. Forms a loose heterodimer with protein S19. Forms two bridges to the 50S subunit in the 70S ribosome.

In terms of biological role, located at the top of the head of the 30S subunit, it contacts several helices of the 16S rRNA. In the 70S ribosome it contacts the 23S rRNA (bridge B1a) and protein L5 of the 50S subunit (bridge B1b), connecting the 2 subunits; these bridges are implicated in subunit movement. Contacts the tRNAs in the A and P-sites. This Levilactobacillus brevis (strain ATCC 367 / BCRC 12310 / CIP 105137 / JCM 1170 / LMG 11437 / NCIMB 947 / NCTC 947) (Lactobacillus brevis) protein is Small ribosomal subunit protein uS13.